Reading from the N-terminus, the 938-residue chain is Respiratory burst oxidase homolog protein C (938 aa).

The segment at 1 to 63 (MQNSENHHPH…DIGTSAGAGA (63 aa)) is disordered. Over 1–369 (MQNSENHHPH…MYFLLDNWQR (369 aa)) the chain is Cytoplasmic. Residues 115 to 141 (ASLVRNASSRIRQVSQELKRLASLNKR) are a coiled coil. EF-hand-like stretches follow at residues 185–195 (TAPTTGLLPRA) and 222–233 (RNITTDSINKAQ). 2 consecutive EF-hand domains span residues 245-280 (SFDT…SASA) and 289-324 (QSDE…APNQ). Asp258, Asp260, Asp262, Arg264, and Glu269 together coordinate Ca(2+). Residues 370–390 (VWVLLLWIGIMAVLFTWKYIQ) form a helical membrane-spanning segment. At 391 to 402 (YKQKAAYDVMGP) the chain is on the extracellular side. Residues 403-423 (CVCLAKGAAETIKLNMAIILL) traverse the membrane as a helical segment. Residues 408–565 (KGAAETIKLN…LFIIVYTLLI (158 aa)) form the Ferric oxidoreductase domain. Over 424 to 454 (PVCRNTITWLRNKTRLGSAVPFDDNLNFHKV) the chain is Cytoplasmic. The helical transmembrane segment at 455–475 (IAVAIALGVAIHGLAHLTCDF) threads the bilayer. The Extracellular portion of the chain corresponds to 476-509 (PKLLNASEEAYEPMIYYFGEQPESYWWFVRGVEG). A helical transmembrane segment spans residues 510–530 (VTGIIMVVLMAIAFTLATPWF). Residues 531–545 (RRGRVSFPKPFHKLT) lie on the Cytoplasmic side of the membrane. Residues 546-566 (GFNAFWYSHHLFIIVYTLLIV) form a helical membrane-spanning segment. At 567–580 (HGEKLYITKDWYKR) the chain is on the extracellular side. A helical membrane pass occupies residues 581–599 (STWMYLTVPLVLYAGERLL). The FAD-binding FR-type domain maps to 599–727 (LRAFRSSIKA…DGPYGAPAQD (129 aa)). Residues 600–732 (RAFRSSIKAV…APAQDYKQYE (133 aa)) lie on the Cytoplasmic side of the membrane. The helical transmembrane segment at 733–753 (VVLLVGLGIGATPMISIVKDI) threads the bilayer. At 754 to 938 (VNNMKAMDEE…TKFDFHKENF (185 aa)) the chain is on the extracellular side. The disordered stretch occupies residues 762-796 (EEENSLENGNGMSNAAQNASPNMAQKRGKSSSASG). Polar residues predominate over residues 767 to 784 (LENGNGMSNAAQNASPNM).

The protein belongs to the RBOH (TC 5.B.1.3) family. Monomer and homodimer. Post-translationally, phosphorylated by CPK. In terms of tissue distribution, expressed in leaves.

It is found in the membrane. Calcium-dependent NADPH oxidase that generates superoxide. May be responsible for the oxidative burst in response to pathogen attack in the leaves. In Solanum tuberosum (Potato), this protein is Respiratory burst oxidase homolog protein C (RBOHC).